The primary structure comprises 430 residues: DNA damage-inducible protein DIN7 (430 aa).

Residues 1–96 form an N-domain region; that stretch reads MGIPGLLPQL…HTETRRRKKR (96 aa). The Mg(2+) site is built by Asp30, Asp78, Glu150, Asp152, Asp171, Asp173, and Asp227. Residues 114-247 form an I-domain region; it reads NAMEYFQKSV…VTAMKIVKRY (134 aa).

Belongs to the XPG/RAD2 endonuclease family. The cofactor is Mg(2+).

The protein resides in the nucleus. Its function is as follows. 5'-&gt;3' double-stranded DNA exonuclease. In Saccharomyces cerevisiae (strain ATCC 204508 / S288c) (Baker's yeast), this protein is DNA damage-inducible protein DIN7 (DIN7).